The following is a 386-amino-acid chain: MGMQMKNFKKMMTLMALCLSVAITTSGYATTLPDIPEPLKNGTGAIDNNGVIYVGLGTAGTSWYKIDLKKQHKDWERIKSFPGGAREQSVSVFLNDELYVFGGVGKKNSESPLQVYSDVYKYSPVKNTWQKVDTISPVGLTGHTGVKLNETMVLITGGVNEHIFDKYFIDIAAAAADESEKNKVIYNYFNKPAKDYFFNKIVFIYNAKENTWKNAGELPDAGTAGSSSVMENNFLMLINGELKPGLRTDVIYRAMWDNDKLTWLKNSQLPPSPGEQQQEGLAGAFSGYSHGVLLVGGGANFPGAKQNYTNGKFYSHEGINKKWRDEVYGLVNGHWQYMGKMKQPLGYGVSVSYGDEVFLIGGENAKGKPVSSVTSFTMRDGNLLIK.

The N-terminal stretch at 1–29 is a signal peptide; that stretch reads MGMQMKNFKKMMTLMALCLSVAITTSGYA. 7 Kelch repeats span residues 51–95, 97–149, 151–186, 187–232, 235–284, 306–355, and 357–386; these read VIYV…VFLN, ELYV…VKLN, TMVL…KVIY, NYFN…VMEN, LMLI…LAGA, QNYT…SYGD, and VFLI…LLIK. Residue Glu241 is the Proton acceptor of the active site.

The protein belongs to the NanM family. Homodimer.

It localises to the periplasm. The catalysed reaction is N-acetyl-alpha-neuraminate = N-acetyl-beta-neuraminate. In terms of biological role, converts alpha-N-acetylneuranimic acid (Neu5Ac) to the beta-anomer, accelerating the equilibrium between the alpha- and beta-anomers. Probably facilitates sialidase-negative bacteria to compete successfully for limited amounts of extracellular Neu5Ac, which is likely taken up in the beta-anomer. In addition, the rapid removal of sialic acid from solution might be advantageous to the bacterium to damp down host responses. In Salmonella choleraesuis (strain SC-B67), this protein is N-acetylneuraminate epimerase.